The sequence spans 752 residues: Multifunctional tryptophan biosynthesis protein (752 aa).

Positions 3-202 (FTLLIDNYDS…IQMKGGKWGG (200 aa)) constitute a Glutamine amidotransferase type-1 domain. 58-60 (GPG) lines the L-glutamine pocket. Cys-86 (nucleophile; for GATase activity) is an active-site residue. 136–137 (SL) contributes to the L-glutamine binding site. Residues His-176 and Glu-178 each act as for GATase activity in the active site. Positions 231–495 (ILNRIHAQRL…DTKAFLRSLI (265 aa)) are indole-3-glycerol phosphate synthase. The segment at 509–752 (LVKICGIRST…VEAFVKAVRG (244 aa)) is N-(5'-phosphoribosyl)anthranilate isomerase.

It catalyses the reaction N-(5-phospho-beta-D-ribosyl)anthranilate = 1-(2-carboxyphenylamino)-1-deoxy-D-ribulose 5-phosphate. The enzyme catalyses 1-(2-carboxyphenylamino)-1-deoxy-D-ribulose 5-phosphate + H(+) = (1S,2R)-1-C-(indol-3-yl)glycerol 3-phosphate + CO2 + H2O. It carries out the reaction chorismate + L-glutamine = anthranilate + pyruvate + L-glutamate + H(+). Its pathway is amino-acid biosynthesis; L-tryptophan biosynthesis; L-tryptophan from chorismate: step 1/5. It functions in the pathway amino-acid biosynthesis; L-tryptophan biosynthesis; L-tryptophan from chorismate: step 3/5. The protein operates within amino-acid biosynthesis; L-tryptophan biosynthesis; L-tryptophan from chorismate: step 4/5. Its function is as follows. Trifunctional enzyme bearing the Gln amidotransferase (GATase) domain of anthranilate synthase, indole-glycerolphosphate synthase, and phosphoribosylanthranilate isomerase activities. In Cryptococcus neoformans var. neoformans serotype D (strain JEC21 / ATCC MYA-565) (Filobasidiella neoformans), this protein is Multifunctional tryptophan biosynthesis protein (TRP1).